The chain runs to 608 residues: Endo-1,4-beta-xylanase C (608 aa).

A signal peptide spans 1–25 (MKTFSVTKSSVVFAMALGMASTAFA). In terms of domain architecture, GH11 1 spans 40–250 (TITSNQTGKI…VNGEVRGGHM (211 aa)). E142 acts as the Nucleophile in catalysis. The active-site Proton donor is E237. Positions 263–294 (SDPVSSSSVKSSSSTDAPKSSSSKGNGNVSGK) are enriched in low complexity. A disordered region spans residues 263-296 (SDPVSSSSVKSSSSTDAPKSSSSKGNGNVSGKID). The GH11 2 domain occupies 316–514 (NSSVTGNVGS…GSGSFDVTYF (199 aa)). E409 functions as the Nucleophile in the catalytic mechanism. E501 acts as the Proton donor in catalysis. The interval 520–539 (AHPLAQPEPESSSSEAKVES) is disordered. Residues 527 to 539 (EPESSSSEAKVES) show a composition bias toward low complexity.

This sequence belongs to the glycosyl hydrolase 11 (cellulase G) family.

It carries out the reaction Endohydrolysis of (1-&gt;4)-beta-D-xylosidic linkages in xylans.. It participates in glycan degradation; xylan degradation. Cleaves xylans with the production of xylose, xylobiose and xylo-oligosaccharides. This is Endo-1,4-beta-xylanase C (xynC) from Fibrobacter succinogenes (strain ATCC 19169 / S85).